The primary structure comprises 291 residues: N-acetylmannosamine kinase (291 aa).

ATP is bound by residues Ala-5–Lys-12 and Gly-132–Ser-139. Positions 156, 166, 168, and 173 each coordinate Zn(2+).

This sequence belongs to the ROK (NagC/XylR) family. NanK subfamily. As to quaternary structure, homodimer.

The enzyme catalyses an N-acyl-D-mannosamine + ATP = an N-acyl-D-mannosamine 6-phosphate + ADP + H(+). It functions in the pathway amino-sugar metabolism; N-acetylneuraminate degradation; D-fructose 6-phosphate from N-acetylneuraminate: step 2/5. Its function is as follows. Catalyzes the phosphorylation of N-acetylmannosamine (ManNAc) to ManNAc-6-P. The polypeptide is N-acetylmannosamine kinase (Escherichia coli (strain K12 / MC4100 / BW2952)).